The following is a 258-amino-acid chain: Insulin-like growth factor-binding protein 4 (258 aa).

Positions Met-1–Gly-21 are cleaved as a signal peptide. The 81-residue stretch at Glu-23–Leu-103 folds into the IGFBP N-terminal domain. 6 disulfides stabilise this stretch: Cys-27–Cys-53, Cys-30–Cys-55, Cys-38–Cys-56, Cys-44–Cys-59, Cys-67–Cys-80, and Cys-74–Cys-100. N-linked (GlcNAc...) asparagine glycosylation is present at Asn-125. Cystine bridges form between Cys-131-Cys-138, Cys-174-Cys-204, Cys-215-Cys-226, and Cys-228-Cys-249. Residues Gln-171–Cys-249 enclose the Thyroglobulin type-1 domain. Residue Ser-255 is modified to Phosphoserine.

Binds IGF2 more than IGF1.

The protein resides in the secreted. IGF-binding proteins prolong the half-life of the IGFs and have been shown to either inhibit or stimulate the growth promoting effects of the IGFs on cell culture. They alter the interaction of IGFs with their cell surface receptors. The polypeptide is Insulin-like growth factor-binding protein 4 (IGFBP4) (Bos taurus (Bovine)).